A 544-amino-acid chain; its full sequence is Chaperonin GroEL (544 aa).

Residues 30–33 (TLGP), Lys-51, 87–91 (DGTTT), Gly-415, 480–482 (DAA), and Asp-496 each bind ATP.

Belongs to the chaperonin (HSP60) family. Forms a cylinder of 14 subunits composed of two heptameric rings stacked back-to-back. Interacts with the co-chaperonin GroES.

It is found in the cytoplasm. The enzyme catalyses ATP + H2O + a folded polypeptide = ADP + phosphate + an unfolded polypeptide.. In terms of biological role, together with its co-chaperonin GroES, plays an essential role in assisting protein folding. The GroEL-GroES system forms a nano-cage that allows encapsulation of the non-native substrate proteins and provides a physical environment optimized to promote and accelerate protein folding. The polypeptide is Chaperonin GroEL (Sulfurihydrogenibium sp. (strain YO3AOP1)).